Reading from the N-terminus, the 347-residue chain is Mediator of RNA polymerase II transcription subunit 7 (347 aa).

Disordered regions lie at residues 97-172 (GIER…TQTH) and 302-326 (VPVG…GAEE). Low complexity-rich tracts occupy residues 108–171 (STTT…STQT) and 302–312 (VPVGARTGTTV).

Belongs to the Mediator complex subunit 7 family. In terms of assembly, component of the Mediator complex.

It is found in the nucleus. In terms of biological role, component of the Mediator complex, a coactivator involved in the regulated transcription of nearly all RNA polymerase II-dependent genes. Mediator functions as a bridge to convey information from gene-specific regulatory proteins to the basal RNA polymerase II transcription machinery. Mediator is recruited to promoters by direct interactions with regulatory proteins and serves as a scaffold for the assembly of a functional preinitiation complex with RNA polymerase II and the general transcription factors. The polypeptide is Mediator of RNA polymerase II transcription subunit 7 (med-7) (Neurospora crassa (strain ATCC 24698 / 74-OR23-1A / CBS 708.71 / DSM 1257 / FGSC 987)).